The sequence spans 394 residues: MQPRKIVILGSTGSIGTQAIDVVDAAPHRFEVVALSAGGGNLALIAQQAVHTRAQAVGIAQGDQGALRQLIAAAAAAAGVRNFAPEIFVGPDASTRIAAIECDVVLNGITGSIGLAPTLAALGTGATLALANKESLIVGGALVKAAASPGQIVPVDSEHSAIAQCLRSGTDQEVEKLILTASGGPFRGRSREQLHDVTPQEALAHPTWDMGLMVTTNSASLVNKGLEVIEAHLLFDVPLDRIDVVVHPQSVVHSMVQFVDGSIIAQASPPDMRLPIALGLGWPDRVPRAAQACDWTQATSWTFEPLDTVAFPAVDLAKDAAKQGSTFPAVFNAANEEAVEAFHAGRIRFTQIVDTVESVLSEHSGSSELTVESVLDAEKWARARTLDRLATSAL.

Positions 12, 13, 14, 15, 38, 41, and 132 each coordinate NADPH. Lys133 is a binding site for 1-deoxy-D-xylulose 5-phosphate. Glu134 contributes to the NADPH binding site. Asp156 lines the Mn(2+) pocket. 1-deoxy-D-xylulose 5-phosphate contacts are provided by Ser157, Glu158, Ser182, and His205. Mn(2+) is bound at residue Glu158. Gly211 lines the NADPH pocket. Residues Ser218, Asn223, Lys224, and Glu227 each contribute to the 1-deoxy-D-xylulose 5-phosphate site. A Mn(2+)-binding site is contributed by Glu227.

It belongs to the DXR family. Mg(2+) is required as a cofactor. Mn(2+) serves as cofactor.

The catalysed reaction is 2-C-methyl-D-erythritol 4-phosphate + NADP(+) = 1-deoxy-D-xylulose 5-phosphate + NADPH + H(+). The protein operates within isoprenoid biosynthesis; isopentenyl diphosphate biosynthesis via DXP pathway; isopentenyl diphosphate from 1-deoxy-D-xylulose 5-phosphate: step 1/6. Its function is as follows. Catalyzes the NADPH-dependent rearrangement and reduction of 1-deoxy-D-xylulose-5-phosphate (DXP) to 2-C-methyl-D-erythritol 4-phosphate (MEP). In Paenarthrobacter aurescens (strain TC1), this protein is 1-deoxy-D-xylulose 5-phosphate reductoisomerase.